A 335-amino-acid polypeptide reads, in one-letter code: tRNA N6-adenosine threonylcarbamoyltransferase (335 aa).

Positions 111 and 115 each coordinate Fe cation. Substrate contacts are provided by residues 133–137, Asp-166, Gly-179, and Asn-276; that span reads LISGG. Asp-301 provides a ligand contact to Fe cation.

This sequence belongs to the KAE1 / TsaD family. The cofactor is Fe(2+).

Its subcellular location is the cytoplasm. The enzyme catalyses L-threonylcarbamoyladenylate + adenosine(37) in tRNA = N(6)-L-threonylcarbamoyladenosine(37) in tRNA + AMP + H(+). Required for the formation of a threonylcarbamoyl group on adenosine at position 37 (t(6)A37) in tRNAs that read codons beginning with adenine. Is involved in the transfer of the threonylcarbamoyl moiety of threonylcarbamoyl-AMP (TC-AMP) to the N6 group of A37, together with TsaE and TsaB. TsaD likely plays a direct catalytic role in this reaction. This chain is tRNA N6-adenosine threonylcarbamoyltransferase, found in Wolbachia pipientis wMel.